The sequence spans 532 residues: 2,3-bisphosphoglycerate-independent phosphoglycerate mutase (532 aa).

2 residues coordinate Mn(2+): Asp-15 and Ser-65. The active-site Phosphoserine intermediate is Ser-65. Residues His-126, Arg-156–Asp-157, Arg-188, Arg-194, Arg-258–Arg-261, and Lys-331 contribute to the substrate site. Mn(2+) is bound by residues Asp-398, His-402, Asp-439, His-440, and His-457.

Belongs to the BPG-independent phosphoglycerate mutase family. In terms of assembly, monomer. Mn(2+) serves as cofactor.

It catalyses the reaction (2R)-2-phosphoglycerate = (2R)-3-phosphoglycerate. Its pathway is carbohydrate degradation; glycolysis; pyruvate from D-glyceraldehyde 3-phosphate: step 3/5. Catalyzes the interconversion of 2-phosphoglycerate and 3-phosphoglycerate. The protein is 2,3-bisphosphoglycerate-independent phosphoglycerate mutase of Microcystis aeruginosa (strain NIES-843 / IAM M-2473).